Reading from the N-terminus, the 348-residue chain is Dihydroorotase (348 aa).

The Zn(2+) site is built by H14 and H16. Residues 16-18 (HLR) and N42 contribute to the substrate site. Residues K100, H137, and H175 each coordinate Zn(2+). K100 is modified (N6-carboxylysine). H137 serves as a coordination point for substrate. Residue L220 participates in substrate binding. Residue D248 participates in Zn(2+) binding. D248 is an active-site residue. The substrate site is built by H252 and A264.

This sequence belongs to the metallo-dependent hydrolases superfamily. DHOase family. Class II DHOase subfamily. Homodimer. Requires Zn(2+) as cofactor.

It catalyses the reaction (S)-dihydroorotate + H2O = N-carbamoyl-L-aspartate + H(+). It participates in pyrimidine metabolism; UMP biosynthesis via de novo pathway; (S)-dihydroorotate from bicarbonate: step 3/3. Functionally, catalyzes the reversible cyclization of carbamoyl aspartate to dihydroorotate. This is Dihydroorotase from Pseudomonas aeruginosa (strain UCBPP-PA14).